Reading from the N-terminus, the 289-residue chain is ATP synthase gamma chain (289 aa).

Belongs to the ATPase gamma chain family. In terms of assembly, F-type ATPases have 2 components, CF(1) - the catalytic core - and CF(0) - the membrane proton channel. CF(1) has five subunits: alpha(3), beta(3), gamma(1), delta(1), epsilon(1). CF(0) has three main subunits: a, b and c.

The protein resides in the cell inner membrane. Functionally, produces ATP from ADP in the presence of a proton gradient across the membrane. The gamma chain is believed to be important in regulating ATPase activity and the flow of protons through the CF(0) complex. The sequence is that of ATP synthase gamma chain from Cereibacter sphaeroides (strain ATCC 17029 / ATH 2.4.9) (Rhodobacter sphaeroides).